Reading from the N-terminus, the 125-residue chain is Small ribosomal subunit protein uS12 (125 aa).

Positions 9–31 (RQGREVEKIKSKSPAMENSPQRR) are disordered. Asp-89 bears the 3-methylthioaspartic acid mark. The interval 105-125 (QGVKDRKQSRSKYGAKRPKAK) is disordered. Basic residues predominate over residues 113–125 (SRSKYGAKRPKAK).

It belongs to the universal ribosomal protein uS12 family. Part of the 30S ribosomal subunit. Contacts proteins S8 and S17. May interact with IF1 in the 30S initiation complex.

Functionally, with S4 and S5 plays an important role in translational accuracy. In terms of biological role, interacts with and stabilizes bases of the 16S rRNA that are involved in tRNA selection in the A site and with the mRNA backbone. Located at the interface of the 30S and 50S subunits, it traverses the body of the 30S subunit contacting proteins on the other side and probably holding the rRNA structure together. The combined cluster of proteins S8, S12 and S17 appears to hold together the shoulder and platform of the 30S subunit. This is Small ribosomal subunit protein uS12 from Polaromonas naphthalenivorans (strain CJ2).